A 260-amino-acid polypeptide reads, in one-letter code: COP9 signalosome complex subunit 7 (260 aa).

One can recognise a PCI domain in the interval 1–159 (MDIEQKQAEI…RCFEVPFAAG (159 aa)). The disordered stretch occupies residues 228–260 (IRGNKEMFGEPSGVMDYEEDGIRPKRRRHPVTR). A compositionally biased stretch (basic residues) spans 251–260 (PKRRRHPVTR).

Belongs to the CSN7/EIF3M family. CSN7 subfamily. As to quaternary structure, component of the CSN complex, probably composed of CSN1, CSN2, CSN3, CSN4, CSN5 (CSN5A or CSN5B), CSN6 (CSN6A or CSN6B), CSN7 and CSN8. In the CSN complex, it probably interacts directly with CSN4. Interacts (via PCI domain) with CSN1 (via PCI domain) and CSN8 (via PCI domain), and (via C-terminal tail) with CSN6A, TSO2 and RNR2A. Cannot interact simultaneously with CSN1 and CSN8 to form ternary complexes. Also exists as a monomeric form. Binds to the translation initiation factors TIF3E1 and TIF3H1. Post-translationally, phosphorylated.

The protein localises to the cytoplasm. It localises to the nucleus. Component of the COP9 signalosome complex (CSN), a complex involved in various cellular and developmental processes such as photomorphogenesis and auxin and jasmonate responses. The CSN complex is an essential regulator of the ubiquitin (Ubl) conjugation pathway by mediating the deneddylation of the cullin subunits of SCF-type E3 ligase complexes, leading to decrease the Ubl ligase activity of SCF. It is involved in repression of photomorphogenesis in darkness by regulating the activity of COP1-containing Ubl ligase complexes. The complex is also required for degradation of IAA6 by regulating the activity of the Ubl ligase SCF-TIR complex. Regulates the TSO2 subcellular localization. May be involved in nucleic acid binding. The sequence is that of COP9 signalosome complex subunit 7 (CSN7) from Arabidopsis thaliana (Mouse-ear cress).